We begin with the raw amino-acid sequence, 165 residues long: Peptidyl-prolyl cis-trans isomerase-like 1 (165 aa).

Residues 3–157 (EREEVILDTS…IVQKILYALN (155 aa)) form the PPIase cyclophilin-type domain.

This sequence belongs to the cyclophilin-type PPIase family. PPIL1 subfamily.

It carries out the reaction [protein]-peptidylproline (omega=180) = [protein]-peptidylproline (omega=0). Its function is as follows. PPIases accelerate the folding of proteins. It catalyzes the cis-trans isomerization of proline imidic peptide bonds in oligopeptides. This chain is Peptidyl-prolyl cis-trans isomerase-like 1 (cyp3), found in Rhizopus delemar (strain RA 99-880 / ATCC MYA-4621 / FGSC 9543 / NRRL 43880) (Mucormycosis agent).